A 443-amino-acid polypeptide reads, in one-letter code: MQVTETLNEGLKRGYAIKVTAAELDAKVNEKLAEAQPEVEMKGFRKGKVPMALLKKQFGQKVMGEAMQESIDGAMNDHFTSSGDRPAMQPEVKMTNENWKEGDDIEVSMSYEALPDIPDVDFSAIELERMTVKADDAAIDEALGSLAETAQNFENRKKGSKAKDGDQIVMDFLGKVDGEAFDGGAAEDYPLVLGSNSFIPGFEEQLVGVKAGEEKAVTVTFPENYQAENLAGKEAVFECTVKEVKKPVPAEIDDELAKKFGAEDLAALKGQIAERLEAEYAGAARAIMKRSLLDALDDIVDFDLPPSLVSAEAGQIAHQLWHEENPDVQGHDHPEITPTEEHTKLAERRVRLGLLLADIGQKAKVEVTDAEMSQAIMNQARQYPGQERQFFEFVQQNQQMQQQMRAPIFEDKVVDHVFAGAKVTEKEVSKDDLQKAVEALEEE.

The 86-residue stretch at 165–250 (GDQIVMDFLG…VKEVKKPVPA (86 aa)) folds into the PPIase FKBP-type domain.

It belongs to the FKBP-type PPIase family. Tig subfamily.

It localises to the cytoplasm. The catalysed reaction is [protein]-peptidylproline (omega=180) = [protein]-peptidylproline (omega=0). Functionally, involved in protein export. Acts as a chaperone by maintaining the newly synthesized protein in an open conformation. Functions as a peptidyl-prolyl cis-trans isomerase. This Roseobacter denitrificans (strain ATCC 33942 / OCh 114) (Erythrobacter sp. (strain OCh 114)) protein is Trigger factor.